Here is a 309-residue protein sequence, read N- to C-terminus: Ubiquitin domain-containing protein UBFD1 (309 aa).

The disordered stretch occupies residues 1–80; sequence MAAAGAPDGM…VSNGEDAGGG (80 aa). A compositionally biased stretch (acidic residues) spans 9–19; it reads GMEEPGMDTEA. Low complexity predominate over residues 35–57; it reads EAEAAAGAAAEDSGAARGSLQPA. Residues 84–159 enclose the Ubiquitin-like domain; that stretch reads ELVDLKIIWN…IMVVGSTIND (76 aa). A disordered region spans residues 171 to 204; the sequence is QQDAKAEENKKEPLCRQKQHRKVLDKGKPEDVMP. Basic and acidic residues-rich tracts occupy residues 174–185 and 192–201; these read AKAEENKKEPLC and KVLDKGKPED.

Binds polyubiquitin.

May play a role as NF-kappa-B regulator. This Homo sapiens (Human) protein is Ubiquitin domain-containing protein UBFD1 (UBFD1).